Here is a 20-residue protein sequence, read N- to C-terminus: Tetracycline resistance leader peptide (20 aa).

The interval 1-20 (MKCNKMNRVQLKEGSVSMTL) is disordered.

The sequence is that of Tetracycline resistance leader peptide (tetL) from Bacillus subtilis (strain 168).